A 163-amino-acid polypeptide reads, in one-letter code: MLKRSSWLAALLGLLTVVSTSTHTYAIELDEATRTVPLESSGRTVILTPEQVKRGKRLFNNSCAICHNGGITKTNPNIGLDPESLGLATPQRDTIEGLVDYMKDPTSYDGAESIAELHPSIKSAEIFPKMRNLTDEDLFTIAGHILLQPKIVSEKWGGGKIYY.

A signal peptide spans 1–26; the sequence is MLKRSSWLAALLGLLTVVSTSTHTYA. 4 residues coordinate heme c: cysteine 63, cysteine 66, histidine 67, and histidine 118.

It belongs to the cytochrome c family. PsbV subfamily. In terms of assembly, PSII is composed of 1 copy each of membrane proteins PsbA, PsbB, PsbC, PsbD, PsbE, PsbF, PsbH, PsbI, PsbJ, PsbK, PsbL, PsbM, PsbT, PsbY, PsbZ, Psb30/Ycf12, at least 3 peripheral proteins of the oxygen-evolving complex and a large number of cofactors. It forms dimeric complexes. The extrinsic subunits in red algae are PsbO (OEC33), PsbQ', cytochrome c-550 and PsbU. It depends on heme c as a cofactor.

It is found in the plastid. Its subcellular location is the chloroplast thylakoid membrane. Its function is as follows. One of the extrinsic, lumenal subunits of photosystem II (PSII). PSII is a light-driven water plastoquinone oxidoreductase, using light energy to abstract electrons from H(2)O, generating a proton gradient subsequently used for ATP formation. The extrinsic proteins stabilize the structure of photosystem II oxygen-evolving complex (OEC), the ion environment of oxygen evolution and protect the OEC against heat-induced inactivation. The protein is Photosystem II extrinsic protein V of Pyropia yezoensis (Susabi-nori).